The following is a 175-amino-acid chain: 3-hydroxydecanoyl-[acyl-carrier-protein] dehydratase (175 aa).

Histidine 74 is a catalytic residue.

This sequence belongs to the thioester dehydratase family. FabA subfamily. Homodimer.

The protein localises to the cytoplasm. The enzyme catalyses a (3R)-hydroxyacyl-[ACP] = a (2E)-enoyl-[ACP] + H2O. It catalyses the reaction (3R)-hydroxydecanoyl-[ACP] = (2E)-decenoyl-[ACP] + H2O. The catalysed reaction is (2E)-decenoyl-[ACP] = (3Z)-decenoyl-[ACP]. It participates in lipid metabolism; fatty acid biosynthesis. In terms of biological role, necessary for the introduction of cis unsaturation into fatty acids. Catalyzes the dehydration of (3R)-3-hydroxydecanoyl-ACP to E-(2)-decenoyl-ACP and then its isomerization to Z-(3)-decenoyl-ACP. Can catalyze the dehydratase reaction for beta-hydroxyacyl-ACPs with saturated chain lengths up to 16:0, being most active on intermediate chain length. The polypeptide is 3-hydroxydecanoyl-[acyl-carrier-protein] dehydratase (Alcanivorax borkumensis (strain ATCC 700651 / DSM 11573 / NCIMB 13689 / SK2)).